The following is a 530-amino-acid chain: Metal transporter Nramp2 (530 aa).

The interval 1-35 (MENDVKENLEEEEDRLLPPPPPSQSLPSTDSESEA) is disordered. 12 helical membrane passes run 68 to 88 (LWLFTGPGFLMSIAFLDPGNL), 96 to 116 (AIAGYSLLWLLMWATAMGLLI), 153 to 173 (LALIGADIQEVIGSAIAIQIL), 177 to 197 (FLPLWAGVVITASDCFLFLFL), 205 to 225 (LEAVFAVLIATMGLSFAWMFG), 251 to 271 (AVGVVGCVIMPHNVFLHSALV), 297 to 317 (VALFISFMINLFVTTVFAKGF), 339 to 359 (FGGGLLPILYIWGIGLLAAGQ), 395 to 415 (IVPTMIVAIVFNTSEASLDVL), 418 to 438 (WLNVLQSVQIPFALLPLLTLV), 456 to 476 (IAWTVAALVMIINGYLLLDFF), and 484 to 504 (LFGVTVCVWTTAYIAFIVYLI).

The protein belongs to the NRAMP (TC 2.A.55) family.

The protein resides in the membrane. Functionally, seems to be involved in iron uptake. This Arabidopsis thaliana (Mouse-ear cress) protein is Metal transporter Nramp2 (NRAMP2).